Here is a 528-residue protein sequence, read N- to C-terminus: MPVTMSRAILDNFLGNSPKWFKLAIISFLVINPIVFYFNPFIAGWLLVVEFIFTLAMALKCYPLQPGGLLAIEAVAIGMTSPSQVLHEIEANLEVVLLLVFMVAGIYFMKQLLLFVFTKMITKVRSKVYVSLLFCVSSAFLSAFLDALTVIAVIITVAVGFYSIYHRVASGKSFADSHDHTSDGHPQLCEEELESFRGFLRNLLMHAGVGTALGGVCTMVGEPQNLIIAAQANWQFAEFAIRMSPVTVPVFFAGVTTCFLVEKFKVFGYGQQLPEAVHKILSDYDAHEDANRTKHDKVKLLVQAFIGVWLIAGLALHLASVGLIGLSVIILATAFNGITNEHALGKAFEEALPFTALLAVFFAIVAVIIDLQLFAPVIQWALSYEGNTQLVVFYIANGLLSMVSDNVFVGTVYINEVKAALLNGQITRDQFDLLAVAINTGTNLPSVATPNGQAAFLFLLTSAIAPLIRLSYGRMVWMALPYTIVLSIVGVLAIQLGALEQMTQYFYDTQLLIHHSAQAVTDSVVSGH.

10 helical membrane passes run Ile-25–Leu-47, Pro-66–Leu-86, Leu-97–Phe-117, Val-130–Ile-164, Ile-241–Val-261, Ala-304–Ile-324, Ala-351–Leu-371, Leu-390–Gly-410, Ala-448–Ile-468, and Val-476–Leu-496.

Belongs to the NhaB Na(+)/H(+) (TC 2.A.34) antiporter family.

It localises to the cell inner membrane. It catalyses the reaction 2 Na(+)(in) + 3 H(+)(out) = 2 Na(+)(out) + 3 H(+)(in). Functionally, na(+)/H(+) antiporter that extrudes sodium in exchange for external protons. The protein is Na(+)/H(+) antiporter NhaB of Shewanella halifaxensis (strain HAW-EB4).